Here is a 437-residue protein sequence, read N- to C-terminus: D-aminoacyl-tRNA deacylase (437 aa).

It belongs to the DtdA deacylase family. Monomer. Requires Zn(2+) as cofactor.

It carries out the reaction a D-aminoacyl-tRNA + H2O = a tRNA + a D-alpha-amino acid + H(+). The catalysed reaction is glycyl-tRNA(Ala) + H2O = tRNA(Ala) + glycine + H(+). Functionally, D-aminoacyl-tRNA deacylase with broad substrate specificity. By recycling D-aminoacyl-tRNA to D-amino acids and free tRNA molecules, this enzyme counteracts the toxicity associated with the formation of D-aminoacyl-tRNA entities in vivo. The sequence is that of D-aminoacyl-tRNA deacylase from Methanoculleus marisnigri (strain ATCC 35101 / DSM 1498 / JR1).